The sequence spans 300 residues: Tyrosine recombinase XerC (300 aa).

The 87-residue stretch at 2–88 (IQEGKLEQQF…SLRSFYTFLL (87 aa)) folds into the Core-binding (CB) domain. Residues 109–294 (RLPKFFYSEE…TKEHLKSTYM (186 aa)) enclose the Tyr recombinase domain. Catalysis depends on residues Arg-150, Lys-174, His-246, Arg-249, and His-272. Residue Tyr-281 is the O-(3'-phospho-DNA)-tyrosine intermediate of the active site.

This sequence belongs to the 'phage' integrase family. XerC subfamily. Forms a cyclic heterotetrameric complex composed of two molecules of XerC and two molecules of XerD.

Its subcellular location is the cytoplasm. In terms of biological role, site-specific tyrosine recombinase, which acts by catalyzing the cutting and rejoining of the recombining DNA molecules. The XerC-XerD complex is essential to convert dimers of the bacterial chromosome into monomers to permit their segregation at cell division. It also contributes to the segregational stability of plasmids. The polypeptide is Tyrosine recombinase XerC (Listeria monocytogenes serotype 4b (strain F2365)).